A 184-amino-acid chain; its full sequence is Peptide methionine sulfoxide reductase (184 aa).

A Phosphoserine modification is found at Ser-58.

It belongs to the MsrA Met sulfoxide reductase family.

It catalyses the reaction L-methionyl-[protein] + [thioredoxin]-disulfide + H2O = L-methionyl-(S)-S-oxide-[protein] + [thioredoxin]-dithiol. It carries out the reaction [thioredoxin]-disulfide + L-methionine + H2O = L-methionine (S)-S-oxide + [thioredoxin]-dithiol. Has an important function as a repair enzyme for proteins that have been inactivated by oxidation. Catalyzes the reversible oxidation-reduction of methionine sulfoxide in proteins to methionine. Also able to reduce dimethyl sulfoxide (DMSO) as well, with DMS as the product. In Saccharomyces cerevisiae (strain ATCC 204508 / S288c) (Baker's yeast), this protein is Peptide methionine sulfoxide reductase (MXR1).